The following is a 363-amino-acid chain: Probable matrix metalloproteinase 095L (363 aa).

The signal sequence occupies residues 1 to 25 (MSVDSFTSRLAVVMTAVVLVWWAQA). The propeptide at 26-126 (LPVPSPRRGE…PRCGVPDVSK (101 aa)) is activation peptide. The short motif at 117–124 (PRCGVPDV) is the Cysteine switch element. Residues C119 and H275 each contribute to the Zn(2+) site. E276 is a catalytic residue. Residues H279 and H285 each coordinate Zn(2+).

Belongs to the peptidase M10A family. Requires Zn(2+) as cofactor.

The protein resides in the secreted. Functionally, probable endopeptidase. The sequence is that of Probable matrix metalloproteinase 095L from Aedes vexans (Inland floodwater mosquito).